We begin with the raw amino-acid sequence, 162 residues long: Nucleotide-binding protein Mpe_A3039 (162 aa).

It belongs to the YajQ family.

In terms of biological role, nucleotide-binding protein. The protein is Nucleotide-binding protein Mpe_A3039 of Methylibium petroleiphilum (strain ATCC BAA-1232 / LMG 22953 / PM1).